The sequence spans 672 residues: DNA mismatch repair protein MutL (672 aa).

The span at 443-454 (SYTSDSNQYENS) shows a compositional bias: polar residues. Residues 443 to 469 (SYTSDSNQYENSCKSDVDKESKSKTTG) are disordered. Residues 455–465 (CKSDVDKESKS) are compositionally biased toward basic and acidic residues.

The protein belongs to the DNA mismatch repair MutL/HexB family.

This protein is involved in the repair of mismatches in DNA. It is required for dam-dependent methyl-directed DNA mismatch repair. May act as a 'molecular matchmaker', a protein that promotes the formation of a stable complex between two or more DNA-binding proteins in an ATP-dependent manner without itself being part of a final effector complex. In Clostridium botulinum (strain Eklund 17B / Type B), this protein is DNA mismatch repair protein MutL.